Here is a 172-residue protein sequence, read N- to C-terminus: MVGPAPRRRLRPLAALALVLALAPGLPTARAGQTPRPAERGPPVRLFTEEELARYGGEEEDQPIYLAVKGVVFDVTSGKEFYGRGAPYNALTGKDSTRGVAKMSLDPADLTHDTTGLTAKELEALDEVFTKVYKAKYPIVGYTARRILNEDGSPNLDFKPEDQPHFDIKDEF.

The signal sequence occupies residues 1–31 (MVGPAPRRRLRPLAALALVLALAPGLPTARA). The Cytochrome b5 heme-binding domain occupies 44-129 (VRLFTEEELA…KELEALDEVF (86 aa)). K136 is modified (N6-acetyllysine). The disordered stretch occupies residues 151-172 (DGSPNLDFKPEDQPHFDIKDEF). The span at 158 to 172 (FKPEDQPHFDIKDEF) shows a compositional bias: basic and acidic residues.

This sequence belongs to the cytochrome b5 family. MAPR subfamily. Interacts with PINK1 and PARK7. As to expression, ubiquitously expressed with high expression in heart. Over-expressed in various tumors including carcinomas of the uterine cervix, lymphoma, colon, lung, skin and leukemia, as well as carcinoma of the breast.

It is found in the secreted. It localises to the extracellular space. Its subcellular location is the mitochondrion. The protein localises to the endoplasmic reticulum. Acts as a neurotrophic factor in postnatal mature neurons enhancing neuronal survival. Promotes cell proliferation and neurogenesis in undifferentiated neural progenitor cells at the embryonic stage and inhibits differentiation of astrocytes. Its neurotrophic activity is exerted via MAPK1/ERK2, MAPK3/ERK1 and AKT1/AKT pathways. Neurotrophic activity is enhanced by binding to heme. Also acts as an anorexigenic neurotrophic factor that contributes to energy balance. The chain is Neudesin from Homo sapiens (Human).